The sequence spans 335 residues: Ketol-acid reductoisomerase (NADP(+)) (335 aa).

Residues 5–185 (SKIYTDNDAN…GATRAGVIPT (181 aa)) enclose the KARI N-terminal Rossmann domain. NADP(+) contacts are provided by residues 28–31 (YGSQ), S56, and 86–89 (DMVQ). The active site involves H111. G137 serves as a coordination point for NADP(+). Residues 186–331 (TFKEETETDL…NQLRDLVQKG (146 aa)) form the KARI C-terminal knotted domain. Mg(2+) contacts are provided by D194, E198, E230, and E234. S255 contributes to the substrate binding site.

This sequence belongs to the ketol-acid reductoisomerase family. Requires Mg(2+) as cofactor.

The catalysed reaction is (2R)-2,3-dihydroxy-3-methylbutanoate + NADP(+) = (2S)-2-acetolactate + NADPH + H(+). It carries out the reaction (2R,3R)-2,3-dihydroxy-3-methylpentanoate + NADP(+) = (S)-2-ethyl-2-hydroxy-3-oxobutanoate + NADPH + H(+). The protein operates within amino-acid biosynthesis; L-isoleucine biosynthesis; L-isoleucine from 2-oxobutanoate: step 2/4. Its pathway is amino-acid biosynthesis; L-valine biosynthesis; L-valine from pyruvate: step 2/4. Its function is as follows. Involved in the biosynthesis of branched-chain amino acids (BCAA). Catalyzes an alkyl-migration followed by a ketol-acid reduction of (S)-2-acetolactate (S2AL) to yield (R)-2,3-dihydroxy-isovalerate. In the isomerase reaction, S2AL is rearranged via a Mg-dependent methyl migration to produce 3-hydroxy-3-methyl-2-ketobutyrate (HMKB). In the reductase reaction, this 2-ketoacid undergoes a metal-dependent reduction by NADPH to yield (R)-2,3-dihydroxy-isovalerate. The chain is Ketol-acid reductoisomerase (NADP(+)) from Saccharolobus solfataricus (strain ATCC 35092 / DSM 1617 / JCM 11322 / P2) (Sulfolobus solfataricus).